The sequence spans 156 residues: CRIB domain-containing protein RIC11 (156 aa).

Residues 26-39 (IGHPTEVKHVAHIG) enclose the CRIB domain. Positions 87–156 (QDQLNISDRI…SMVSRLNSNA (70 aa)) are disordered. The segment covering 109–120 (IHTKSKNRRKKP) has biased composition (basic residues). The segment covering 121–142 (SSTSSPRSRPSPKSSRSMGLSK) has biased composition (low complexity).

In terms of biological role, functions as a downstream effector of Rho-related GTP binding proteins of the 'Rho of Plants' (ROPs) family. Participates in the propagation of ROP GTPase signals in specific cellular responses. The chain is CRIB domain-containing protein RIC11 (RIC11) from Arabidopsis thaliana (Mouse-ear cress).